Reading from the N-terminus, the 489-residue chain is Lysine--tRNA ligase (489 aa).

Mg(2+) is bound by residues glutamate 399 and glutamate 406.

The protein belongs to the class-II aminoacyl-tRNA synthetase family. Homodimer. The cofactor is Mg(2+).

It localises to the cytoplasm. It carries out the reaction tRNA(Lys) + L-lysine + ATP = L-lysyl-tRNA(Lys) + AMP + diphosphate. The chain is Lysine--tRNA ligase from Roseiflexus sp. (strain RS-1).